The following is a 173-amino-acid chain: Peptide methionine sulfoxide reductase MsrA (173 aa).

The active site involves cysteine 10.

Belongs to the MsrA Met sulfoxide reductase family.

It catalyses the reaction L-methionyl-[protein] + [thioredoxin]-disulfide + H2O = L-methionyl-(S)-S-oxide-[protein] + [thioredoxin]-dithiol. It carries out the reaction [thioredoxin]-disulfide + L-methionine + H2O = L-methionine (S)-S-oxide + [thioredoxin]-dithiol. Has an important function as a repair enzyme for proteins that have been inactivated by oxidation. Catalyzes the reversible oxidation-reduction of methionine sulfoxide in proteins to methionine. The sequence is that of Peptide methionine sulfoxide reductase MsrA from Psychrobacter arcticus (strain DSM 17307 / VKM B-2377 / 273-4).